We begin with the raw amino-acid sequence, 569 residues long: Urease subunit alpha (569 aa).

Residues 131–569 (GGFDSHIHFI…LPMAQRYFLF (439 aa)) enclose the Urease domain. Ni(2+)-binding residues include His-136, His-138, and Lys-219. Lys-219 is modified (N6-carboxylysine). A substrate-binding site is contributed by His-221. His-248 and His-274 together coordinate Ni(2+). His-322 acts as the Proton donor in catalysis. Asp-362 is a binding site for Ni(2+).

It belongs to the metallo-dependent hydrolases superfamily. Urease alpha subunit family. As to quaternary structure, heterotrimer of UreA (gamma), UreB (beta) and UreC (alpha) subunits. Three heterotrimers associate to form the active enzyme. Requires Ni cation as cofactor. Post-translationally, carboxylation allows a single lysine to coordinate two nickel ions.

It localises to the cytoplasm. The enzyme catalyses urea + 2 H2O + H(+) = hydrogencarbonate + 2 NH4(+). It functions in the pathway nitrogen metabolism; urea degradation; CO(2) and NH(3) from urea (urease route): step 1/1. The polypeptide is Urease subunit alpha (Ruegeria pomeroyi (strain ATCC 700808 / DSM 15171 / DSS-3) (Silicibacter pomeroyi)).